We begin with the raw amino-acid sequence, 676 residues long: Lutropin-choriogonadotropic hormone receptor (676 aa).

A signal peptide spans 1–29 (MKQPLLALQLLKLLLLLLLPLPPLPRALR). At 30 to 340 (EARCCPEPCN…EDIMGYDFLR (311 aa)) the chain is on the extracellular side. Asparagine 103 carries an N-linked (GlcNAc...) asparagine glycan. LRR repeat units lie at residues 126-151 (LPRLKYLSICNTGIRKFPDVTKIFSS), 153-175 (TNFILEICDNLHITTIPGNAFQG), 176-200 (MNNESITLKLYGNGFEEVQSHAFNG), 201-224 (TTVISLVLKENVHLERIHNGAFRG), and 225-248 (ATGPSILDISSTKLQALPSHGLES). 2 N-linked (GlcNAc...) asparagine glycosylation sites follow: asparagine 178 and asparagine 199. Tyrosine 308 carries the post-translational modification Sulfotyrosine. Residues 341-362 (VLIWLINILAIMGNMTVLFVLL) form a helical membrane-spanning segment. Over 363–372 (TSRYKLTVPR) the chain is Cytoplasmic. A helical transmembrane segment spans residues 373 to 393 (FLMCNLSFADFCMGLYLLLIA). At 394 to 416 (SVDSQTKGQYYNHAIDWQTGSGC) the chain is on the extracellular side. The cysteines at positions 416 and 491 are disulfide-linked. A helical transmembrane segment spans residues 417–439 (NTAGFFTVFASELSVYTLTVITL). Topologically, residues 440-459 (ERWHTITYAIHLDQKLRLRH) are cytoplasmic. Residues 460-482 (AILIMLGGWLFSSLIAMLPLVGV) traverse the membrane as a helical segment. The Extracellular segment spans residues 483 to 502 (SNYMKVSICFPMDVETTLSQ). A helical membrane pass occupies residues 503–526 (IYILTILILNVVAFIIICACYIKI). Residues 527 to 547 (YFAVRNPELMATNKDTKIAKK) lie on the Cytoplasmic side of the membrane. The helical transmembrane segment at 548 to 571 (MAILIFTDFTCMAPISFFAISAAF) threads the bilayer. Topologically, residues 572 to 582 (KMPLITVTNSK) are extracellular. Residues 583 to 604 (VLLVLFYPINSCANPFLYAIFT) form a helical membrane-spanning segment. The Cytoplasmic segment spans residues 605–676 (KTFRRDFFLL…LLDKTCYKEY (72 aa)). Residues cysteine 620 and cysteine 621 are each lipidated (S-palmitoyl cysteine).

It belongs to the G-protein coupled receptor 1 family. FSH/LSH/TSH subfamily. Sulfated.

The protein localises to the cell membrane. In terms of biological role, receptor for lutropin-choriogonadotropic hormone. The activity of this receptor is mediated by G proteins which activate adenylate cyclase. This is Lutropin-choriogonadotropic hormone receptor (LHCGR) from Callithrix jacchus (White-tufted-ear marmoset).